Here is a 159-residue protein sequence, read N- to C-terminus: uncharacterized protein (159 aa).

The N-acetyltransferase domain maps to 7-151; the sequence is LLINYKTLEE…NPLVWHPASE (145 aa).

This is an uncharacterized protein from Bacillus licheniformis (strain ATCC 14580 / DSM 13 / JCM 2505 / CCUG 7422 / NBRC 12200 / NCIMB 9375 / NCTC 10341 / NRRL NRS-1264 / Gibson 46).